A 288-amino-acid chain; its full sequence is Acetyl-coenzyme A carboxylase carboxyl transferase subunit beta (288 aa).

The 255-residue stretch at 34-288 (LFAKCPACKH…HLVAFHGGGQ (255 aa)) folds into the CoA carboxyltransferase N-terminal domain. 4 residues coordinate Zn(2+): cysteine 38, cysteine 41, cysteine 56, and cysteine 59. Residues 38–59 (CPACKHMIYKKDLGLAKICPTC) form a C4-type zinc finger.

This sequence belongs to the AccD/PCCB family. As to quaternary structure, acetyl-CoA carboxylase is a heterohexamer composed of biotin carboxyl carrier protein (AccB), biotin carboxylase (AccC) and two subunits each of ACCase subunit alpha (AccA) and ACCase subunit beta (AccD). Zn(2+) is required as a cofactor.

It is found in the cytoplasm. The catalysed reaction is N(6)-carboxybiotinyl-L-lysyl-[protein] + acetyl-CoA = N(6)-biotinyl-L-lysyl-[protein] + malonyl-CoA. The protein operates within lipid metabolism; malonyl-CoA biosynthesis; malonyl-CoA from acetyl-CoA: step 1/1. Component of the acetyl coenzyme A carboxylase (ACC) complex. Biotin carboxylase (BC) catalyzes the carboxylation of biotin on its carrier protein (BCCP) and then the CO(2) group is transferred by the transcarboxylase to acetyl-CoA to form malonyl-CoA. This Streptococcus pyogenes serotype M1 protein is Acetyl-coenzyme A carboxylase carboxyl transferase subunit beta.